Consider the following 60-residue polypeptide: Large ribosomal subunit protein uL30 (60 aa).

This sequence belongs to the universal ribosomal protein uL30 family. As to quaternary structure, part of the 50S ribosomal subunit.

This is Large ribosomal subunit protein uL30 from Histophilus somni (strain 2336) (Haemophilus somnus).